Reading from the N-terminus, the 319-residue chain is MNKVNILPSDTNIKITLFSEVSVGISANSVLFFAHLCMFFEENRSKPIDLCIAFLSLTQLMLLVTMGLIAADMFMSQGIWDSTTCRSIIYFHRLLRGFNLCAACLLHILWTFTLSPRSSCLTKFKHKSPHHISCAFFSLCVLYMLFSSHLFVLIIATSNLTSDHFMYVTQSCSILPMSYSRTTMFSLVMVTREAFLISLMALFSGYMVTLLWRHKKQVQHLHSTSLSSKSSPQQRATRTILLLMSFFVVLYILDIVIFQSRTKFKDGSMFYSLHIIVSHSYATISPFVFIFSDKRIIKFLGSMSGRIINICLFSDGYGP.

At 1 to 19 the chain is on the extracellular side; the sequence is MNKVNILPSDTNIKITLFS. Residues 20 to 40 form a helical membrane-spanning segment; the sequence is EVSVGISANSVLFFAHLCMFF. At 41 to 49 the chain is on the cytoplasmic side; the sequence is EENRSKPID. Residues 50–70 traverse the membrane as a helical segment; it reads LCIAFLSLTQLMLLVTMGLIA. The Extracellular segment spans residues 71–93; the sequence is ADMFMSQGIWDSTTCRSIIYFHR. The cysteines at positions 85 and 172 are disulfide-linked. The chain crosses the membrane as a helical span at residues 94–114; that stretch reads LLRGFNLCAACLLHILWTFTL. The Cytoplasmic segment spans residues 115–134; it reads SPRSSCLTKFKHKSPHHISC. The helical transmembrane segment at 135–155 threads the bilayer; that stretch reads AFFSLCVLYMLFSSHLFVLII. The Extracellular segment spans residues 156-193; it reads ATSNLTSDHFMYVTQSCSILPMSYSRTTMFSLVMVTRE. An N-linked (GlcNAc...) asparagine glycan is attached at Asn159. A helical transmembrane segment spans residues 194 to 214; the sequence is AFLISLMALFSGYMVTLLWRH. At 215-238 the chain is on the cytoplasmic side; it reads KKQVQHLHSTSLSSKSSPQQRATR. Residues 239 to 259 form a helical membrane-spanning segment; that stretch reads TILLLMSFFVVLYILDIVIFQ. Residues 260–269 are Extracellular-facing; the sequence is SRTKFKDGSM. The helical transmembrane segment at 270-290 threads the bilayer; it reads FYSLHIIVSHSYATISPFVFI. Residues 291–319 are Cytoplasmic-facing; that stretch reads FSDKRIIKFLGSMSGRIINICLFSDGYGP.

It belongs to the G-protein coupled receptor 1 family.

The protein resides in the cell membrane. Putative pheromone receptor implicated in the regulation of social as well as reproductive behavior. The polypeptide is Vomeronasal type-1 receptor 96 (Vom1r96) (Rattus norvegicus (Rat)).